Consider the following 76-residue polypeptide: Sec-independent protein translocase protein TatA (76 aa).

The chain crosses the membrane as a helical span at residues 1-21; sequence MGSFSIWHWLIVLVIVMLVFG. 2 stretches are compositionally biased toward basic and acidic residues: residues 41 to 50 and 57 to 76; these read DGMKDGEDKG and KELR…SRQQ. The disordered stretch occupies residues 41 to 76; the sequence is DGMKDGEDKGAQPAASKELRDSTTIDVDAKEKSRQQ.

It belongs to the TatA/E family. In terms of assembly, the Tat system comprises two distinct complexes: a TatABC complex, containing multiple copies of TatA, TatB and TatC subunits, and a separate TatA complex, containing only TatA subunits. Substrates initially bind to the TatABC complex, which probably triggers association of the separate TatA complex to form the active translocon.

The protein localises to the cell inner membrane. Functionally, part of the twin-arginine translocation (Tat) system that transports large folded proteins containing a characteristic twin-arginine motif in their signal peptide across membranes. TatA could form the protein-conducting channel of the Tat system. The protein is Sec-independent protein translocase protein TatA of Cupriavidus taiwanensis (strain DSM 17343 / BCRC 17206 / CCUG 44338 / CIP 107171 / LMG 19424 / R1) (Ralstonia taiwanensis (strain LMG 19424)).